The primary structure comprises 267 residues: Undecaprenyl-diphosphatase (267 aa).

Helical transmembrane passes span 1 to 21 (MTYFEAFFLALLQGFTEFLPI), 39 to 59 (QGLAFDVAVHVGTLAAVVMYF), 87 to 107 (WLIILSTIPAAVCGLMFKDFI), 111 to 131 (LRSAWVIAITTIVFGLLLWWV), 149 to 169 (ALFLGIAQAAAMIPGTSRSGI), 189 to 209 (FLMSIPIITLAGSYLGLKLAL), 218 to 238 (FLGTGIIVSFISAYICIHFFL), and 246 to 266 (MTPFVIYRLLLGTSLLAWLAL).

The protein belongs to the UppP family.

Its subcellular location is the cell inner membrane. It carries out the reaction di-trans,octa-cis-undecaprenyl diphosphate + H2O = di-trans,octa-cis-undecaprenyl phosphate + phosphate + H(+). In terms of biological role, catalyzes the dephosphorylation of undecaprenyl diphosphate (UPP). Confers resistance to bacitracin. The polypeptide is Undecaprenyl-diphosphatase (Aliivibrio salmonicida (strain LFI1238) (Vibrio salmonicida (strain LFI1238))).